The sequence spans 347 residues: Spermidine/putrescine import ATP-binding protein PotA (347 aa).

The region spanning 6 to 236 (IEIKNVYKEF…PKNAFVAKFI (231 aa)) is the ABC transporter domain. 38 to 45 (GPSGCGKT) contacts ATP.

It belongs to the ABC transporter superfamily. Spermidine/putrescine importer (TC 3.A.1.11.1) family. The complex is composed of two ATP-binding proteins (PotA), two transmembrane proteins (PotB and PotC) and a solute-binding protein (PotD).

Its subcellular location is the cell membrane. The catalysed reaction is ATP + H2O + polyamine-[polyamine-binding protein]Side 1 = ADP + phosphate + polyamineSide 2 + [polyamine-binding protein]Side 1.. Functionally, part of the ABC transporter complex PotABCD involved in spermidine/putrescine import. Responsible for energy coupling to the transport system. This chain is Spermidine/putrescine import ATP-binding protein PotA, found in Clostridium novyi (strain NT).